The primary structure comprises 66 residues: uncharacterized protein (66 aa).

The first 19 residues, 1–19 (MRRLYRHLASFFLLPSCPG), serve as a signal peptide directing secretion.

This is an uncharacterized protein from Saccharomyces cerevisiae (strain ATCC 204508 / S288c) (Baker's yeast).